The following is a 382-amino-acid chain: Succinyl-diaminopimelate desuccinylase (382 aa).

A Zn(2+)-binding site is contributed by histidine 68. Aspartate 70 is an active-site residue. A Zn(2+)-binding site is contributed by aspartate 101. Glutamate 135 acts as the Proton acceptor in catalysis. The Zn(2+) site is built by glutamate 136, glutamate 164, and histidine 350.

Belongs to the peptidase M20A family. DapE subfamily. As to quaternary structure, homodimer. Zn(2+) is required as a cofactor. Co(2+) serves as cofactor.

The catalysed reaction is N-succinyl-(2S,6S)-2,6-diaminopimelate + H2O = (2S,6S)-2,6-diaminopimelate + succinate. It participates in amino-acid biosynthesis; L-lysine biosynthesis via DAP pathway; LL-2,6-diaminopimelate from (S)-tetrahydrodipicolinate (succinylase route): step 3/3. Functionally, catalyzes the hydrolysis of N-succinyl-L,L-diaminopimelic acid (SDAP), forming succinate and LL-2,6-diaminopimelate (DAP), an intermediate involved in the bacterial biosynthesis of lysine and meso-diaminopimelic acid, an essential component of bacterial cell walls. The chain is Succinyl-diaminopimelate desuccinylase from Acidithiobacillus ferrooxidans (strain ATCC 23270 / DSM 14882 / CIP 104768 / NCIMB 8455) (Ferrobacillus ferrooxidans (strain ATCC 23270)).